Reading from the N-terminus, the 1021-residue chain is Probable LRR receptor-like serine/threonine-protein kinase RFK1 (1021 aa).

The N-terminal stretch at 1 to 39 is a signal peptide; the sequence is MISLYQILAEKKKKKKNDLNIFAFSVFAIICFKFYSVNA. Over 41–625 the chain is Extracellular; the sequence is KLPQQEVDAL…PKTGMSPGAY (585 aa). A glycan (N-linked (GlcNAc...) asparagine) is linked at Asn-96. 2 LRR repeats span residues 99 to 122 and 123 to 146; these read DCHV…IVKL and PYLR…WASS. N-linked (GlcNAc...) asparagine glycosylation is found at Asn-136, Asn-147, and Asn-168. LRR repeat units lie at residues 148–168, 169–192, 193–216, 218–240, and 241–266; these read LTFI…EFGN, SSLT…LGNL, VHLK…LARL, NMTD…IQNW, and KQLE…VLSN. Residue Asn-218 is glycosylated (N-linked (GlcNAc...) asparagine). 2 N-linked (GlcNAc...) asparagine glycosylation sites follow: Asn-287 and Asn-300. LRR repeat units follow at residues 288-312, 313-336, 338-359, and 361-381; these read VTGL…LSHL, KELE…AQAE, LRFI…LLRD, and ITVD…RACR. Asn-486 and Asn-512 each carry an N-linked (GlcNAc...) asparagine glycan. The helical transmembrane segment at 626-646 threads the bilayer; that stretch reads IAIGIGAPCLIIFILGFLWIC. Topologically, residues 647–1021 are cytoplasmic; that stretch reads GCLPRCGRQR…QERKKEESRP (375 aa). A Phosphothreonine modification is found at Thr-670. The Protein kinase domain maps to 681–956; that stretch reads FNPTNKIGEG…EVVAMLEGLY (276 aa). ATP-binding positions include 687 to 695 and Lys-709; that span reads IGEGGFGAV. Tyr-754 carries the phosphotyrosine modification. Residue Asp-807 is the Proton acceptor of the active site. At Ser-840 the chain carries Phosphoserine. Thr-841 and Thr-846 each carry phosphothreonine. Phosphotyrosine is present on Tyr-854. Residues 985–1021 are disordered; sequence ENNSKTQCSVKSYPSSSSTSSGAGQAVQERKKEESRP. Residues 993–1005 are compositionally biased toward low complexity; that stretch reads SVKSYPSSSSTSS. Over residues 1012 to 1021 the composition is skewed to basic and acidic residues; it reads QERKKEESRP.

This sequence belongs to the protein kinase superfamily. Ser/Thr protein kinase family. Mostly expressed in flower buds, especially in stamens.

It localises to the membrane. The enzyme catalyses L-seryl-[protein] + ATP = O-phospho-L-seryl-[protein] + ADP + H(+). The catalysed reaction is L-threonyl-[protein] + ATP = O-phospho-L-threonyl-[protein] + ADP + H(+). This is Probable LRR receptor-like serine/threonine-protein kinase RFK1 (RKF1) from Arabidopsis thaliana (Mouse-ear cress).